Reading from the N-terminus, the 499-residue chain is WD repeat-containing protein 55 homolog (499 aa).

Positions 1–130 (MHTHNNFKTP…EATFDLDVDD (130 aa)) are disordered. Acidic residues-rich tracts occupy residues 12–23 (DEDELDDLDEDM) and 31–48 (IEQE…EYDL). Positions 91-103 (DDAGGASAGGATS) are enriched in low complexity. The span at 113–122 (PSGSNRQSEA) shows a compositional bias: polar residues. WD repeat units follow at residues 154 to 193 (KLED…NKLL), 198 to 237 (VHSK…LKKL), 241 to 279 (AHDD…AIFE), 282 to 321 (ELED…MYVQ), 324 to 363 (PYEE…YHCD), and 408 to 447 (QHNM…DFGD). A disordered region spans residues 480 to 499 (TKEDADDDDHDPSAGPSNMA).

Belongs to the WD repeat WDR55 family.

This is WD repeat-containing protein 55 homolog from Drosophila yakuba (Fruit fly).